A 459-amino-acid polypeptide reads, in one-letter code: Argininosuccinate lyase (459 aa).

This sequence belongs to the lyase 1 family. Argininosuccinate lyase subfamily.

It is found in the cytoplasm. It catalyses the reaction 2-(N(omega)-L-arginino)succinate = fumarate + L-arginine. Its pathway is amino-acid biosynthesis; L-arginine biosynthesis; L-arginine from L-ornithine and carbamoyl phosphate: step 3/3. The polypeptide is Argininosuccinate lyase (Prochlorococcus marinus (strain MIT 9515)).